The following is a 432-amino-acid chain: 2-oxoglutarate-dependent dioxygenase AOP2 (432 aa).

One can recognise a Fe2OG dioxygenase domain in the interval 281 to 378; sequence SGDDVEANDD…RYTAAIFTCP (98 aa). Residues His-301, Asp-303, and His-358 each contribute to the Fe cation site. A 2-oxoglutarate-binding site is contributed by Arg-369.

Belongs to the iron/ascorbate-dependent oxidoreductase family. Fe(2+) serves as cofactor.

2-oxoglutarate-dependent dioxygenase involved in glucosinolates biosynthesis. Catalyzes the conversion of methylsulfinylalkyl glucosinolates to alkenyl glucosinolates. This is 2-oxoglutarate-dependent dioxygenase AOP2 (AOP2) from Arabidopsis thaliana (Mouse-ear cress).